Reading from the N-terminus, the 274-residue chain is Large ribosomal subunit protein uL2 (274 aa).

Positions 223–256 (VVMNPVDHPHGGGEGKTGEGRHPVDPWGNLTKGY) are disordered. Over residues 229–246 (DHPHGGGEGKTGEGRHPV) the composition is skewed to basic and acidic residues.

This sequence belongs to the universal ribosomal protein uL2 family. As to quaternary structure, part of the 50S ribosomal subunit. Forms a bridge to the 30S subunit in the 70S ribosome.

In terms of biological role, one of the primary rRNA binding proteins. Required for association of the 30S and 50S subunits to form the 70S ribosome, for tRNA binding and peptide bond formation. It has been suggested to have peptidyltransferase activity; this is somewhat controversial. Makes several contacts with the 16S rRNA in the 70S ribosome. This is Large ribosomal subunit protein uL2 from Variovorax paradoxus (strain S110).